Reading from the N-terminus, the 285-residue chain is Nucleotide-binding protein GSU1884 (285 aa).

ATP is bound at residue 8–15 (GLSGSGKS). GTP is bound at residue 59–62 (DIRG).

This sequence belongs to the RapZ-like family.

Displays ATPase and GTPase activities. This Geobacter sulfurreducens (strain ATCC 51573 / DSM 12127 / PCA) protein is Nucleotide-binding protein GSU1884.